The following is a 175-amino-acid chain: Peptide deformylase (175 aa).

Cysteine 92 and histidine 134 together coordinate Fe cation. Glutamate 135 is an active-site residue. Histidine 138 is a binding site for Fe cation.

It belongs to the polypeptide deformylase family. The cofactor is Fe(2+).

The catalysed reaction is N-terminal N-formyl-L-methionyl-[peptide] + H2O = N-terminal L-methionyl-[peptide] + formate. Functionally, removes the formyl group from the N-terminal Met of newly synthesized proteins. Requires at least a dipeptide for an efficient rate of reaction. N-terminal L-methionine is a prerequisite for activity but the enzyme has broad specificity at other positions. In Blochmanniella floridana, this protein is Peptide deformylase.